Consider the following 722-residue polypeptide: Glycine--tRNA ligase beta subunit (722 aa).

Belongs to the class-II aminoacyl-tRNA synthetase family. In terms of assembly, tetramer of two alpha and two beta subunits.

It localises to the cytoplasm. It catalyses the reaction tRNA(Gly) + glycine + ATP = glycyl-tRNA(Gly) + AMP + diphosphate. In Haemophilus influenzae (strain 86-028NP), this protein is Glycine--tRNA ligase beta subunit.